The chain runs to 799 residues: High affinity nerve growth factor receptor (799 aa).

Residues 1 to 33 (MLRGQRLGQLGWHRPAAGLGSLMTSLMLACASA) form the signal peptide. Over 34 to 420 (ASCREVCCPV…VEKKDETPFG (387 aa)) the chain is Extracellular. Disulfide bonds link cysteine 36–cysteine 41 and cysteine 40–cysteine 50. The N-linked (GlcNAc...) asparagine glycan is linked to asparagine 67. LRR repeat units follow at residues 90–113 (LGEL…AFRF) and 116–137 (RLSH…TVQG). N-linked (GlcNAc...) asparagine glycosylation is found at asparagine 121, asparagine 190, asparagine 204, asparagine 255, asparagine 264, asparagine 320, asparagine 325, asparagine 341, asparagine 361, and asparagine 404. The LRRCT domain maps to 148–219 (NPLHCSCALF…GDDVFLQCQV (72 aa)). Cysteine 154 and cysteine 193 are oxidised to a cystine. Ig-like C2-type domains lie at 196 to 285 (PTVK…VSVS) and 205 to 368 (DSVE…LAAN). Intrachain disulfides connect cysteine 217–cysteine 267 and cysteine 302–cysteine 348. Residues 421–441 (VSVAVGLAVSAALFLSALLLV) form a helical membrane-spanning segment. The Cytoplasmic segment spans residues 442-799 (LNKCGQRSKF…APPSYLDVLG (358 aa)). The interaction with SQSTM1 stretch occupies residues 472-493 (MTLGGSSLSPTEGKGSGLQGHI). Tyrosine 499 carries the phosphotyrosine; by autocatalysis modification. The 272-residue stretch at 513-784 (IILKWELGEG…LSMKDVHARL (272 aa)) folds into the Protein kinase domain. ATP-binding positions include 519–527 (LGEGAFGKV) and lysine 547. Aspartate 653 acts as the Proton acceptor in catalysis. Residues tyrosine 679, tyrosine 683, tyrosine 684, and tyrosine 794 each carry the phosphotyrosine; by autocatalysis modification.

Belongs to the protein kinase superfamily. Tyr protein kinase family. Insulin receptor subfamily. In terms of assembly, exists in a dynamic equilibrium between monomeric (low affinity) and dimeric (high affinity) structures. Homodimerization is induced by binding of a NGF dimer. Found in a complex, at least composed of KIDINS220, MAGI2, NTRK1 and RAPGEF2; the complex is mainly formed at late endosomes in a nerve growth factor (NGF)-dependent manner. Interacts with RAPGEF2; the interaction is strengthened after NGF stimulation. Interacts with SQSTM1; bridges NTRK1 to NGFR. Forms a ternary complex with NGFR and KIDINS220; this complex is affected by the expression levels of KIDINS220 and an increase in KIDINS220 expression leads to a decreased association of NGFR and NTRK1. Interacts (phosphorylated upon activation by NGF) with SHC1; mediates SHC1 phosphorylation and activation. Interacts (phosphorylated upon activation by NGF) with PLCG1; mediates PLCG1 phosphorylation and activation. Interacts (phosphorylated) with SH2B1 and SH2B2. Interacts with GRB2. Interacts with PIK3R1. Interacts with FRS2. Interacts with SORT1; may regulate NTRK1 anterograde axonal transport. Interacts with SH2D1A; regulates NTRK1. Interacts with NRADD. Interacts with RAB7A. Interacts with PTPRS. Interacts with USP36; USP36 does not deubiquitinate NTRK1. Interacts with GGA3. Interacts with TSPAN1; this interaction promotes NTRK1 stability. Ligand-mediated autophosphorylation. Interaction with SQSTM1 is phosphotyrosine-dependent. Autophosphorylation at Tyr-499 mediates interaction and phosphorylation of SHC1. Post-translationally, N-glycosylated. In terms of processing, ubiquitinated. Undergoes polyubiquitination upon activation; regulated by NGFR. Ubiquitination by NEDD4L leads to degradation. Ubiquitination regulates the internalization of the receptor.

It is found in the cell membrane. It localises to the early endosome membrane. The protein localises to the late endosome membrane. The protein resides in the recycling endosome membrane. The enzyme catalyses L-tyrosyl-[protein] + ATP = O-phospho-L-tyrosyl-[protein] + ADP + H(+). The pro-survival signaling effect of NTRK1 in neurons requires its endocytosis into signaling early endosomes and its retrograde axonal transport. This is regulated by different proteins including CFL1, RAC1 and SORT1. NTF3 is unable to induce this signaling probably due to the lability of the NTF3-NTRK1 complex in endosomes. SH2D1A inhibits the autophosphorylation of the receptor, and alters the recruitment and activation of downstream effectors and signaling cascades. Regulated by NGFR. Its function is as follows. Receptor tyrosine kinase involved in the development and the maturation of the central and peripheral nervous systems through regulation of proliferation, differentiation and survival of sympathetic and nervous neurons. High affinity receptor for NGF which is its primary ligand, it can also bind and be activated by NTF3/neurotrophin-3. However, NTF3 only supports axonal extension through NTRK1 but has no effect on neuron survival. Upon dimeric NGF ligand-binding, undergoes homodimerization, autophosphorylation and activation. Recruits, phosphorylates and/or activates several downstream effectors including SHC1, FRS2, SH2B1, SH2B2 and PLCG1 that regulate distinct overlapping signaling cascades driving cell survival and differentiation. Through SHC1 and FRS2 activates a GRB2-Ras-MAPK cascade that regulates cell differentiation and survival. Through PLCG1 controls NF-Kappa-B activation and the transcription of genes involved in cell survival. Through SHC1 and SH2B1 controls a Ras-PI3 kinase-AKT1 signaling cascade that is also regulating survival. In absence of ligand and activation, may promote cell death, making the survival of neurons dependent on trophic factors. The chain is High affinity nerve growth factor receptor (Ntrk1) from Mus musculus (Mouse).